The following is a 394-amino-acid chain: Protein TsgA homolog (394 aa).

12 helical membrane-spanning segments follow: residues Trp11–Met31, Phe51–Pro71, Leu76–Leu96, Ala101–Ile121, Leu134–Thr154, Val160–Thr180, Ile206–Ile226, Gly246–Leu266, Ile274–Gln294, Met297–Ile317, Phe334–Val354, and Leu363–Val383.

It belongs to the major facilitator superfamily. TsgA family.

Its subcellular location is the cell inner membrane. The protein is Protein TsgA homolog of Edwardsiella ictaluri (strain 93-146).